Here is a 108-residue protein sequence, read N- to C-terminus: DNA-directed RNA polymerase subunit omega (108 aa).

Residues 1 to 32 (MTNSQSDAALAAVPDRFDPSAGGPGAYDTPLG) form a disordered region.

This sequence belongs to the RNA polymerase subunit omega family. As to quaternary structure, the RNAP catalytic core consists of 2 alpha, 1 beta, 1 beta' and 1 omega subunit. When a sigma factor is associated with the core the holoenzyme is formed, which can initiate transcription.

The catalysed reaction is RNA(n) + a ribonucleoside 5'-triphosphate = RNA(n+1) + diphosphate. Promotes RNA polymerase assembly. Latches the N- and C-terminal regions of the beta' subunit thereby facilitating its interaction with the beta and alpha subunits. The protein is DNA-directed RNA polymerase subunit omega of Mycobacterium avium (strain 104).